We begin with the raw amino-acid sequence, 419 residues long: Histidine--tRNA ligase (419 aa).

It belongs to the class-II aminoacyl-tRNA synthetase family.

The protein resides in the cytoplasm. It carries out the reaction tRNA(His) + L-histidine + ATP = L-histidyl-tRNA(His) + AMP + diphosphate + H(+). The protein is Histidine--tRNA ligase of Pyrobaculum aerophilum (strain ATCC 51768 / DSM 7523 / JCM 9630 / CIP 104966 / NBRC 100827 / IM2).